Reading from the N-terminus, the 153-residue chain is Transcriptional repressor NrdR (153 aa).

The tract at residues M1 to D20 is disordered. The segment at C3–C34 is a zinc-finger region. The segment covering T11–D20 has biased composition (basic and acidic residues). The region spanning I49 to D139 is the ATP-cone domain.

Belongs to the NrdR family. The cofactor is Zn(2+).

Functionally, negatively regulates transcription of bacterial ribonucleotide reductase nrd genes and operons by binding to NrdR-boxes. The chain is Transcriptional repressor NrdR from Anaplasma phagocytophilum (strain HZ).